We begin with the raw amino-acid sequence, 304 residues long: CD-NTase-associated protein 6 (304 aa).

An ATP-binding site is contributed by 75 to 80 (GTGKTS).

This sequence belongs to the AAA ATPase family. Oligomerizes. Homohexamer. Forms a 1:1:6 CdnD:Cap7:Cap6 complex.

In terms of biological role, regulates complex assembly in a CBASS antivirus system. CBASS (cyclic oligonucleotide-based antiphage signaling system) provides immunity against bacteriophage. The CD-NTase protein synthesizes cyclic nucleotides in response to infection; these serve as specific second messenger signals. The signals activate a diverse range of effectors, leading to bacterial cell death and thus abortive phage infection. A type III-C(AAA) CBASS system. Functionally, prevents the CdnD:Cap7:Cap8 complex (also called CdnD:HORMA2:HORMA3) from synthesizing 2',3',3'-cyclic AMP-AMP-AMP (cAAA). Binds and disassembles an active CdnD:Cap7:Cap8 complex, inhibiting the complex's ability to synthesize cyclic nucleotide second messengers. An AAA+-ATPase remodeler, in the absence of foreign threat Cap6 probably maintains the Cap7 protein in an open, inactive state. Once activated (presumably by a bacteriophage protein) Cap7 binds to and activates its cognate CD-NTase (CdnD in this bacteria) to synthesize cAAA, a cyclic nucleotide second messenger. cAAA activates the NucC endonuclease which degrades all DNA in the infected cell, causing cell death and abortive phage infection. This chain is CD-NTase-associated protein 6, found in Pseudomonas aeruginosa.